The sequence spans 1485 residues: Chromosome partition protein MukB (1485 aa).

Residue 34–41 coordinates ATP; sequence GGNGAGKS. 2 coiled-coil regions span residues 311 to 480 and 519 to 665; these read EMAR…EAYR and GARL…RLSQ. Positions 666-783 are flexible hinge; the sequence is PGGAEDARLI…SLPLFGRAAR (118 aa). Coiled-coil stretches lie at residues 832–1115 and 1209–1265; these read NDPE…QAKA and IDAI…LQSV.

This sequence belongs to the SMC family. MukB subfamily. As to quaternary structure, homodimerization via its hinge domain. Binds to DNA via its C-terminal region. Interacts, and probably forms a ternary complex, with MukE and MukF via its C-terminal region. The complex formation is stimulated by calcium or magnesium. Interacts with tubulin-related protein FtsZ.

Its subcellular location is the cytoplasm. The protein localises to the nucleoid. Plays a central role in chromosome condensation, segregation and cell cycle progression. Functions as a homodimer, which is essential for chromosome partition. Involved in negative DNA supercoiling in vivo, and by this means organize and compact chromosomes. May achieve or facilitate chromosome segregation by condensation DNA from both sides of a centrally located replisome during cell division. This Edwardsiella ictaluri (strain 93-146) protein is Chromosome partition protein MukB.